A 542-amino-acid chain; its full sequence is MKPIKEIADQLELKDDILYPYGHYIAKIDHRFLKSLENHEDGKLILVTAVTPTPAGEGKTTTSIGLSMSLNRIGKKSIVTLREPSLGPTLGLKGGATGGGRSRVLPSDEINLHFTGDMHAVASAHNLLAAVLDSHIKHGNELKIDITRVFWKRTMDMNDRALRSIVIGLGGSANGFPREDSFIITAASEVMAILALSENMKDLKERLGKIIVALDADRKIVRISDLGIQGAMAVLLKDAINPNLVQTTEGTPALIHCGPFANIAHGTNSIIATKMAMKLSEYTVTEAGFGADLGAEKFIDFVSRVGGFYPNAAVLVATVRALKYHGGANLKNIHEENLEALKEGFKNLRVHVENLRKFNLPVVVALNRFSTDTEKEIAYVVKECEKLGVRVAVSEVFKKGSEGGVELAKAVAEAAKDVEPAYLYEMNDPVEKKIEILAKEIYRAGRVEFSDTAKNALKFIKKHGFDELPVIVAKTPKSISHDPSLRGAPEGYTFVVSDLFVSAGAGFVVALSGDINLMPGLPKKPNALNMDVDDSGNIVGVS.

53 to 60 (TPAGEGKT) contributes to the ATP binding site.

This sequence belongs to the formate--tetrahydrofolate ligase family.

The enzyme catalyses (6S)-5,6,7,8-tetrahydrofolate + formate + ATP = (6R)-10-formyltetrahydrofolate + ADP + phosphate. Its pathway is one-carbon metabolism; tetrahydrofolate interconversion. The polypeptide is Formate--tetrahydrofolate ligase (Thermotoga maritima (strain ATCC 43589 / DSM 3109 / JCM 10099 / NBRC 100826 / MSB8)).